Consider the following 446-residue polypeptide: MANPLPPRPDLIAAVATAPGRGGVGVVRVSGPDVGPLAVAILGRLPEPRHVTYCRFLDRAGAPLDEGIALYFAAPHSFTGEHVLELQGHGGPVVLDLILQRCLELGARLAEPGEFSRRAFLNGKLDLAQAEAVADLIDAASAEAARSALRSLSGEFSARIDELVEQLVRLRTLVEATLDFPDEEIDFLEQADAFGRLKAIGTSVAAVRSQARQGVLLREGLTVVLVGQPNVGKSSLLNRLAGFDAAIVTEIAGTTRDTVREAIQIEGVPIHVIDTAGLRETSDPIEQLGIARSWEAVEKADVALLLVDAAHGVGAHEAQILAKLPDVVRLTVHNKIDVAGEAPRATADEIWLSAKSGEGVDLLRAKLLQAAGWQAAGEGAFMARTRHLDALDRAARHIEQAGAVARQLELFAEELRLAQAALAEITGEFSADALLGEIFGSFCIGK.

(6S)-5-formyl-5,6,7,8-tetrahydrofolate is bound by residues Arg-28, Glu-85, and Lys-124. The 153-residue stretch at 220–372 folds into the TrmE-type G domain; the sequence is GLTVVLVGQP…LRAKLLQAAG (153 aa). Asn-230 lines the K(+) pocket. Residues 230 to 235, 249 to 255, and 274 to 277 contribute to the GTP site; these read NVGKSS, TEIAGTT, and DTAG. Ser-234 is a binding site for Mg(2+). The K(+) site is built by Thr-249, Ile-251, and Thr-254. Residue Thr-255 participates in Mg(2+) binding. Lys-446 contributes to the (6S)-5-formyl-5,6,7,8-tetrahydrofolate binding site.

This sequence belongs to the TRAFAC class TrmE-Era-EngA-EngB-Septin-like GTPase superfamily. TrmE GTPase family. Homodimer. Heterotetramer of two MnmE and two MnmG subunits. It depends on K(+) as a cofactor.

The protein resides in the cytoplasm. Its function is as follows. Exhibits a very high intrinsic GTPase hydrolysis rate. Involved in the addition of a carboxymethylaminomethyl (cmnm) group at the wobble position (U34) of certain tRNAs, forming tRNA-cmnm(5)s(2)U34. The sequence is that of tRNA modification GTPase MnmE from Thiobacillus denitrificans (strain ATCC 25259 / T1).